The following is a 258-amino-acid chain: Snake venom serine protease CL2 (258 aa).

The signal sequence occupies residues M1–A18. A propeptide spanning residues Q19–L24 is cleaved from the precursor. Positions V25–A249 constitute a Peptidase S1 domain. Cystine bridges form between C31/C163, C50/C66, C98/C256, C142/C210, C174/C189, and C200/C225. N44 is a glycosylation site (N-linked (GlcNAc...) asparagine). H65 functions as the Charge relay system in the catalytic mechanism. N-linked (GlcNAc...) asparagine glycosylation is present at N103. D110 acts as the Charge relay system in catalysis. N121 carries an N-linked (GlcNAc...) asparagine glycan. S204 acts as the Charge relay system in catalysis. N251 carries N-linked (GlcNAc...) asparagine glycosylation.

Belongs to the peptidase S1 family. Snake venom subfamily. Monomer. Expressed by the venom gland.

It is found in the secreted. Functionally, snake venom serine protease that may act in the hemostasis system of the prey. This Trimeresurus stejnegeri (Chinese green tree viper) protein is Snake venom serine protease CL2.